The following is a 327-amino-acid chain: GTPase Obg (327 aa).

The Obg domain occupies 1 to 159 (MKFVDSARIV…LKVDLELKLM (159 aa)). Residues 120-145 (GGDGGRGNPHFTTSTRQAPRYAEPGG) are disordered. One can recognise an OBG-type G domain in the interval 160–323 (ADVGLVGFPN…LRNALWNTIN (164 aa)). GTP contacts are provided by residues 166-173 (GFPNAGKS), 191-195 (FTTLV), 213-216 (DIPG), 280-283 (TKMD), and 304-306 (SSI). The Mg(2+) site is built by serine 173 and threonine 193.

The protein belongs to the TRAFAC class OBG-HflX-like GTPase superfamily. OBG GTPase family. As to quaternary structure, monomer. It depends on Mg(2+) as a cofactor.

It is found in the cytoplasm. Functionally, an essential GTPase which binds GTP, GDP and possibly (p)ppGpp with moderate affinity, with high nucleotide exchange rates and a fairly low GTP hydrolysis rate. Plays a role in control of the cell cycle, stress response, ribosome biogenesis and in those bacteria that undergo differentiation, in morphogenesis control. The chain is GTPase Obg from Prosthecochloris aestuarii (strain DSM 271 / SK 413).